A 647-amino-acid polypeptide reads, in one-letter code: MPNEFISQSLSTLTNTPLNIQKKLLPITKYRNQLLYAVEQNQITIVLGHTGCGKTTQIPQFLYEAGWASQNGIIGCTQPRRLVAKSVSERVSLELNSPPGSLCGYSIQFDHNVSEKTKIKYMTDGILLNEIFFDPLLERYSIVILDEVHERTLSTDLLLGVLKRILEKRNDFRLVLSSASVDANKLSQFFGQDKVCTMSIEGKLFPVETLFLQKPTENYVDSAIETVININSTYPPGDILVFLSGRKEIEYCIKKIEDSLIHASEDCQTLVPLPLHAGLTVDEQMRVFNIYDGDFRKVIFSTNIAETSITIDGIVYVVDSGFNKQRIYNPYTRTSKLINVPISKSSAIQRSGRAGRTMRGKVFRLYTEKAYSLMKEEFEADILNCDMSPLVLFLKGLGLKNILQFPFFVRPPTVHLMAALEDLYLLGVLDESGNLTDPLGIQISNSFLDANISKALLTSNQFGCTHEILSIASILTAGEVFYNPTSSSKNDAFVAHSSFFANEGDIITALNVFESFVGNKKDLQWCRKNYLNYQTLRQALDIRTHLVRFLNKFSIPTAQRLPSSDCSKILKCLLDGFVRNVAHLQNDGSYKTIGGKQVWLDSSSVLHEKKTPWIMYSSAVESETQIFVKNISKIESFWLDKYYKREK.

Residues 35–199 enclose the Helicase ATP-binding domain; the sequence is LYAVEQNQIT…FGQDKVCTMS (165 aa). 48-55 is an ATP binding site; the sequence is GHTGCGKT. Residues 146–149 carry the DEAH box motif; it reads DEVH. Positions 219–398 constitute a Helicase C-terminal domain; the sequence is YVDSAIETVI…PLVLFLKGLG (180 aa).

It belongs to the DEAD box helicase family. DEAH subfamily.

It localises to the nucleus. It carries out the reaction ATP + H2O = ADP + phosphate + H(+). Functionally, pre-mRNA processing factor involved in disassembly of spliceosomes after the release of mature mRNA. The sequence is that of Putative pre-mRNA-splicing factor ATP-dependent RNA helicase C20H4.09 from Schizosaccharomyces pombe (strain 972 / ATCC 24843) (Fission yeast).